The chain runs to 122 residues: MIQQESRLKVADNSGAREILVIKILGGSRVKTGNIGDIIVATVKQATPGGVVKKGDVVKAVVVRTKHGIHRKDGSYIKFDENAAVLINNDKSPKGTRIFGPIARELRGDDFMKIVSLAPEVL.

Belongs to the universal ribosomal protein uL14 family. Part of the 50S ribosomal subunit. Forms a cluster with proteins L3 and L19. In the 70S ribosome, L14 and L19 interact and together make contacts with the 16S rRNA in bridges B5 and B8.

Binds to 23S rRNA. Forms part of two intersubunit bridges in the 70S ribosome. This Limosilactobacillus reuteri (strain DSM 20016) (Lactobacillus reuteri) protein is Large ribosomal subunit protein uL14.